The chain runs to 473 residues: Suppressor of SWI4 1 homolog (473 aa).

Residues 29–292 (PHSFVFTRGC…LIKVQEGVGE (264 aa)) form the Brix domain. 2 positions are modified to phosphoserine: serine 238 and serine 240. The disordered stretch occupies residues 323-473 (AQRQAQQAQN…GRGRPGKRVA (151 aa)). The segment covering 324 to 334 (QRQAQQAQNVQ) has biased composition (low complexity). Positions 335-352 (RKQEQREAHRKKSLEGMK) are enriched in basic and acidic residues. Serine 359 carries the phosphoserine modification. The segment covering 375–388 (LGEDDDEQEDDDIE) has biased composition (acidic residues). Basic residues predominate over residues 409–421 (KRLAKSPGRKRKR). Over residues 422 to 443 (WEMDRGRGRLCDQKFPKTKDKS) the composition is skewed to basic and acidic residues. At lysine 438 the chain carries N6-acetyllysine. The segment covering 462 to 473 (GRGRGRPGKRVA) has biased composition (basic residues).

In terms of tissue distribution, widely expressed.

Its subcellular location is the nucleus. It is found in the nucleolus. In terms of biological role, may have a role in cell growth. This Homo sapiens (Human) protein is Suppressor of SWI4 1 homolog (PPAN).